A 548-amino-acid polypeptide reads, in one-letter code: 2-succinyl-5-enolpyruvyl-6-hydroxy-3-cyclohexene-1-carboxylate synthase (548 aa).

Belongs to the TPP enzyme family. MenD subfamily. In terms of assembly, homodimer. Mg(2+) is required as a cofactor. It depends on Mn(2+) as a cofactor. Requires thiamine diphosphate as cofactor.

It carries out the reaction isochorismate + 2-oxoglutarate + H(+) = 5-enolpyruvoyl-6-hydroxy-2-succinyl-cyclohex-3-ene-1-carboxylate + CO2. It functions in the pathway quinol/quinone metabolism; 1,4-dihydroxy-2-naphthoate biosynthesis; 1,4-dihydroxy-2-naphthoate from chorismate: step 2/7. The protein operates within quinol/quinone metabolism; menaquinone biosynthesis. Its function is as follows. Catalyzes the thiamine diphosphate-dependent decarboxylation of 2-oxoglutarate and the subsequent addition of the resulting succinic semialdehyde-thiamine pyrophosphate anion to isochorismate to yield 2-succinyl-5-enolpyruvyl-6-hydroxy-3-cyclohexene-1-carboxylate (SEPHCHC). The protein is 2-succinyl-5-enolpyruvyl-6-hydroxy-3-cyclohexene-1-carboxylate synthase of Mycobacterium marinum (strain ATCC BAA-535 / M).